Consider the following 485-residue polypeptide: MTITPQNLIALLPLLIVGLTVVVVMLSIAWRRNHFLNATLSVIGLNAALVSLWFVGQAGAMDVTPLMRVDGFAMLYTGLVLLASLATCTFAYPWLEGYNDNKDEFYLLVLIAALGGILLANANHLASLFLGIELISLPLFGLVGYAFRQKRSLEASIKYTILSAAASSFLLFGMALVYAQSGDLSFVALGKNLGDGMLNEPLLLAGFGLMIVGLGFKLSLVPFHLWTPDVYQGAPAPVSTFLATASKIAIFGVVMRLFLYAPVGDSEAIRVVLAIIAFASIIFGNLMALSQTNIKRLLGYSSISHLGYLLVALIALQTGEMSMEAVGVYLAGYLFSSLGAFGVVSLMSSPYRGPDADSLFSYRGLFWHRPILAAVMTVMMLSLAGIPMTLGFIGKFYVLAVGVQTHLWWLVGAVVVGSAIGLYYYLRVAVSLYLHAPEQPGRDAPSNWQYSAGGIVVLISALLVLVLGVWPQPLISIVRLAMPLM.

Helical transmembrane passes span 8–28 (LIAL…MLSI), 35–55 (FLNA…LWFV), 71–91 (GFAM…CTFA), 105–125 (FYLL…ANHL), 127–147 (SLFL…GYAF), 159–179 (YTIL…LVYA), 203–223 (LLAG…LVPF), 235–255 (PAPV…GVVM), 271–291 (VVLA…ALSQ), 297–317 (LLGY…IALQ), 326–346 (VGVY…VVSL), 373–393 (AAVM…LGFI), 408–430 (WWLV…RVAV), and 455–475 (IVVL…QPLI).

This sequence belongs to the complex I subunit 2 family. In terms of assembly, NDH-1 is composed of 13 different subunits. Subunits NuoA, H, J, K, L, M, N constitute the membrane sector of the complex.

It localises to the cell inner membrane. It carries out the reaction a quinone + NADH + 5 H(+)(in) = a quinol + NAD(+) + 4 H(+)(out). Functionally, NDH-1 shuttles electrons from NADH, via FMN and iron-sulfur (Fe-S) centers, to quinones in the respiratory chain. The immediate electron acceptor for the enzyme in this species is believed to be ubiquinone. Couples the redox reaction to proton translocation (for every two electrons transferred, four hydrogen ions are translocated across the cytoplasmic membrane), and thus conserves the redox energy in a proton gradient. The sequence is that of NADH-quinone oxidoreductase subunit N from Escherichia coli (strain ATCC 8739 / DSM 1576 / NBRC 3972 / NCIMB 8545 / WDCM 00012 / Crooks).